Consider the following 441-residue polypeptide: tRNA modification GTPase MnmE (441 aa).

3 residues coordinate (6S)-5-formyl-5,6,7,8-tetrahydrofolate: Arg22, Glu80, and Lys118. Residues 213–366 (GIYIAIVGEP…LLNLIKQRVE (154 aa)) enclose the TrmE-type G domain. Residues 223-228 (NSGKST), 242-248 (SEYAGTT), and 267-270 (DTAG) contribute to the GTP site. Ser227 and Thr248 together coordinate Mg(2+). A (6S)-5-formyl-5,6,7,8-tetrahydrofolate-binding site is contributed by Lys441.

Belongs to the TRAFAC class TrmE-Era-EngA-EngB-Septin-like GTPase superfamily. TrmE GTPase family. Homodimer. Heterotetramer of two MnmE and two MnmG subunits. K(+) is required as a cofactor.

The protein resides in the cytoplasm. Functionally, exhibits a very high intrinsic GTPase hydrolysis rate. Involved in the addition of a carboxymethylaminomethyl (cmnm) group at the wobble position (U34) of certain tRNAs, forming tRNA-cmnm(5)s(2)U34. In Ehrlichia canis (strain Jake), this protein is tRNA modification GTPase MnmE.